Reading from the N-terminus, the 331-residue chain is ADP-L-glycero-D-manno-heptose-6-epimerase (331 aa).

NADP(+) is bound by residues 11–12 (FI), 32–33 (DN), Lys-39, Lys-54, 75–79 (EGACS), and Asn-92. Catalysis depends on Tyr-139, which acts as the Proton acceptor. NADP(+) is bound at residue Lys-143. Asn-168 contacts substrate. Val-169 and Lys-177 together coordinate NADP(+). Lys-177 serves as the catalytic Proton acceptor. Substrate-binding positions include Arg-179, His-186, 200-203 (FGEY), Arg-213, and Tyr-292.

Belongs to the NAD(P)-dependent epimerase/dehydratase family. HldD subfamily. As to quaternary structure, homopentamer. The cofactor is NADP(+).

It carries out the reaction ADP-D-glycero-beta-D-manno-heptose = ADP-L-glycero-beta-D-manno-heptose. Its pathway is nucleotide-sugar biosynthesis; ADP-L-glycero-beta-D-manno-heptose biosynthesis; ADP-L-glycero-beta-D-manno-heptose from D-glycero-beta-D-manno-heptose 7-phosphate: step 4/4. Functionally, catalyzes the interconversion between ADP-D-glycero-beta-D-manno-heptose and ADP-L-glycero-beta-D-manno-heptose via an epimerization at carbon 6 of the heptose. This chain is ADP-L-glycero-D-manno-heptose-6-epimerase, found in Ralstonia pickettii (strain 12J).